Here is a 369-residue protein sequence, read N- to C-terminus: MAGITMGSEHMYDDTTFPTNDPESSWKIVLAGEKFMTASAALKTIVGCVKNPLITFSDDGLMIQGTVCGQRMFVPIDCTSFSEYEWRGPTAIFLALTDSRRTLLDAFKCDKKKVVEVCFTFRGEPPCRHLTQTVTYANDGCSFSSTIVKYELWSASIICPQKTPDATFSLNKQQLSKILTVAAKVQHEELIFALKAEGGFYAGTICDVISFDIDGSAMVQYPYNATSHASSALIVACGKKKTNKSIAVTAYGSGKPFCLALEDTNAFRNVVQKIKTGAAGADLGFYTTCDPPMLCVRPHVFGSPTAFLFCNSDCMSIYELEEVSAVSGAIKSKRISEYFPKVSNIGSRKRGPSSPPFEREGKLAKVINQ.

The interval 345–369 (IGSRKRGPSSPPFEREGKLAKVINQ) is disordered.

The protein belongs to the herpesviridae DNA polymerase processivity factor family. Interacts with the DNA polymerase catalytic subunit. Interacts with the origin-binding protein.

The protein localises to the host nucleus. In terms of biological role, plays an essential role in viral DNA replication by acting as the polymerase accessory subunit. Associates with the viral polymerase to increase its processivity and forms high-affinity direct interactions with DNA. Facilitates the origin-binding protein UL9 loading onto DNA thus increasing its ability to assemble into a functional complex capable of unwinding duplex DNA. The polypeptide is DNA polymerase processivity factor (MDV055) (Gallus gallus (Chicken)).